A 314-amino-acid chain; its full sequence is Secreted frizzled-related protein 1 (314 aa).

An N-terminal signal peptide occupies residues 1–31 (MGVGRSARGRGGAASGVLLALAAALLAAGSA). Residues 53 to 169 (TKPPQCVDIP…FPEGDVCIAM (117 aa)) form the FZ domain. Disulfide bonds link Cys58–Cys121, Cys68–Cys114, Cys105–Cys140, Cys129–Cys166, and Cys133–Cys157. Asn173 carries an N-linked (GlcNAc...) asparagine glycan. Cystine bridges form between Cys186–Cys256, Cys189–Cys258, and Cys203–Cys306. The 121-residue stretch at 186-306 (CPPCDNELKS…FMKRMKNHEC (121 aa)) folds into the NTR domain.

This sequence belongs to the secreted frizzled-related protein (sFRP) family. In terms of assembly, interacts with WNT8, WNT1, WNT2, WNT4 and FRZD6. Interacts with MYOC. In terms of tissue distribution, highly expressed in kidney and embryonic heart. Also highly expressed in the eye, where it is principally localized to the ciliary body and the lens epithelium. Weaker expression in heart, lung and brain. In the brain, is expressed exclusively in the choroid plexus.

The protein localises to the secreted. Its function is as follows. Soluble frizzled-related proteins (sFRPS) function as modulators of Wnt signaling through direct interaction with Wnts. They have a role in regulating cell growth and differentiation in specific cell types. SFRP1 decreases intracellular beta-catenin levels. Has antiproliferative effects on vascular cells, in vitro and in vivo, and can induce, in vivo, an angiogenic response. In vascular cell cycle, delays the G1 phase and entry into the S phase. In kidney development, inhibits tubule formation and bud growth in metanephroi. Inhibits WNT1/WNT4-mediated TCF-dependent transcription. The sequence is that of Secreted frizzled-related protein 1 from Mus musculus (Mouse).